Consider the following 285-residue polypeptide: Biotin synthase (285 aa).

A Radical SAM core domain is found at 2–223 (STRKQIFLCA…RRAHTLLGED (222 aa)). Residues cysteine 20, cysteine 24, and cysteine 27 each contribute to the [4Fe-4S] cluster site. Residues cysteine 64, cysteine 99, and cysteine 157 each contribute to the [2Fe-2S] cluster site.

The protein belongs to the radical SAM superfamily. Biotin synthase family. As to quaternary structure, homodimer. It depends on [4Fe-4S] cluster as a cofactor. The cofactor is [2Fe-2S] cluster.

The catalysed reaction is (4R,5S)-dethiobiotin + (sulfur carrier)-SH + 2 reduced [2Fe-2S]-[ferredoxin] + 2 S-adenosyl-L-methionine = (sulfur carrier)-H + biotin + 2 5'-deoxyadenosine + 2 L-methionine + 2 oxidized [2Fe-2S]-[ferredoxin]. It participates in cofactor biosynthesis; biotin biosynthesis; biotin from 7,8-diaminononanoate: step 2/2. Its function is as follows. Catalyzes the conversion of dethiobiotin (DTB) to biotin by the insertion of a sulfur atom into dethiobiotin via a radical-based mechanism. The sequence is that of Biotin synthase from Sulfurovum sp. (strain NBC37-1).